The primary structure comprises 613 residues: Probable hydrolase clz13 (613 aa).

An N-terminal signal peptide occupies residues 1–25 (MCLLSMRFTVAILLVLLSHCGGSHA). Residues N61, N89, N286, N422, N456, N477, and N581 are each glycosylated (N-linked (GlcNAc...) asparagine).

The protein belongs to the beta-lactamase family.

It functions in the pathway secondary metabolite biosynthesis. In terms of biological role, probable hydrolase; part of the gene cluster that mediates the biosynthesis of squalestatin S1 (SQS1, also known as zaragozic acid A), a heavily oxidized fungal polyketide that offers potent cholesterol lowering activity by targeting squalene synthase (SS). SQS1 is composed of a 2,8-dioxobicyclic[3.2.1]octane-3,4,5-tricarboxyclic acid core that is connected to two lipophilic polyketide arms. These initial steps feature the priming of an unusual benzoic acid starter unit onto the highly reducing polyketide synthase clz14, followed by oxaloacetate extension and product release to generate a tricarboxylic acid containing product. The phenylalanine ammonia lyase (PAL) clz10 and the acyl-CoA ligase clz12 are involved in transforming phenylalanine into benzoyl-CoA. The citrate synthase-like protein clz17 is involved in connecting the C-alpha-carbons of the hexaketide chain and oxaloacetate to afford the tricarboxylic acid unit. The potential hydrolytic enzymes, clz11 and clz13, are in close proximity to pks2 and may participate in product release. On the other side, the tetraketide arm is synthesized by a the squalestatin tetraketide synthase clz2 and enzymatically esterified to the core in the last biosynthetic step, by the acetyltransferase clz6. The biosynthesis of the tetraketide must involve 3 rounds of chain extension. After the first and second rounds methyl-transfer occurs, and in all rounds of extension the ketoreductase and dehydratase are active. The enoyl reductase and C-MeT of clz2 are not active in the final round of extension. The acetyltransferase clz6 appears to have a broad substrate selectivity for its acyl CoA substrate, allowing the in vitro synthesis of novel squalestatins. The biosynthesis of SQS1 requires several oxidative steps likely performed by oxidoreductases clz3, clz15 and clz16. Finally, in support of the identification of the cluster as being responsible for SQS1 production, the cluster contains a gene encoding a putative squalene synthase (SS) clz20, suggesting a likely mechanism for self-resistance. In Cochliobolus lunatus (Filamentous fungus), this protein is Probable hydrolase clz13.